The following is a 201-amino-acid chain: Glutathione peroxidase 1 (201 aa).

Serine 32 is modified (phosphoserine). The active site involves selenocysteine 47. Residue selenocysteine 47 is a non-standard amino acid, selenocysteine. An N6-acetyllysine; alternate mark is found at lysine 86 and lysine 112. 2 positions are modified to N6-succinyllysine; alternate: lysine 86 and lysine 112. N6-acetyllysine is present on lysine 119. Lysine 146 bears the N6-acetyllysine; alternate mark. N6-succinyllysine; alternate is present on lysine 146. Serine 195 and serine 199 each carry phosphoserine.

It belongs to the glutathione peroxidase family. In terms of assembly, homotetramer. Interacts with MIEN1. During periods of oxidative stress, Sec-47 may react with a superoxide radical, irreversibly lose hydroselenide and be converted to dehydroalanine. As to expression, expressed in liver and lung.

It is found in the cytoplasm. The protein localises to the mitochondrion. The enzyme catalyses 2 glutathione + H2O2 = glutathione disulfide + 2 H2O. It catalyses the reaction a hydroperoxy polyunsaturated fatty acid + 2 glutathione = a hydroxy polyunsaturated fatty acid + glutathione disulfide + H2O. The catalysed reaction is tert-butyl hydroperoxide + 2 glutathione = tert-butanol + glutathione disulfide + H2O. It carries out the reaction cumene hydroperoxide + 2 glutathione = 2-phenylpropan-2-ol + glutathione disulfide + H2O. The enzyme catalyses (13S)-hydroperoxy-(9Z,11E)-octadecadienoate + 2 glutathione = (13S)-hydroxy-(9Z,11E)-octadecadienoate + glutathione disulfide + H2O. It catalyses the reaction (9S)-hydroperoxy-(10E,12Z)-octadecadienoate + 2 glutathione = (9S)-hydroxy-(10E,12Z)-octadecadienoate + glutathione disulfide + H2O. The catalysed reaction is (5S)-hydroperoxy-(6E,8Z,11Z,14Z)-eicosatetraenoate + 2 glutathione = (5S)-hydroxy-(6E,8Z,11Z,14Z)-eicosatetraenoate + glutathione disulfide + H2O. It carries out the reaction (12S)-hydroperoxy-(5Z,8Z,10E,14Z)-eicosatetraenoate + 2 glutathione = (12S)-hydroxy-(5Z,8Z,10E,14Z)-eicosatetraenoate + glutathione disulfide + H2O. The enzyme catalyses (12R)-hydroperoxy-(5Z,8Z,10E,14Z)-eicosatetraenoate + 2 glutathione = (12R)-hydroxy-(5Z,8Z,10E,14Z)-eicosatetraenoate + glutathione disulfide + H2O. It catalyses the reaction (15S)-hydroperoxy-(5Z,8Z,11Z,13E)-eicosatetraenoate + 2 glutathione = (15S)-hydroxy-(5Z,8Z,11Z,13E)-eicosatetraenoate + glutathione disulfide + H2O. The catalysed reaction is (5S)-hydroperoxy-(6E,8Z,11Z,14Z,17Z)-eicosapentaenoate + 2 glutathione = (5S)-hydroxy-(6E,8Z,11Z,14Z,17Z)-eicosapentaenoate + glutathione disulfide + H2O. It carries out the reaction (12S)-hydroperoxy-(5Z,8Z,10E,14Z,17Z)-eicosapentaenoate + 2 glutathione = (12S)-hydroxy-(5Z,8Z,10E,14Z,17Z)-eicosapentaenoate + glutathione disulfide + H2O. The enzyme catalyses (15S)-hydroperoxy-(5Z,8Z,11Z,13E,17Z)-eicosapentaenoate + 2 glutathione = (15S)-hydroxy-(5Z,8Z,11Z,13E,17Z)-eicosapentaenoate + glutathione disulfide + H2O. It catalyses the reaction (15S)-hydroperoxy-(11Z,13E)-eicosadienoate + 2 glutathione = (15S)-hydroxy-(11Z,13E)-eicosadienoate + glutathione disulfide + H2O. The catalysed reaction is (17S)-hydroperoxy-(4Z,7Z,10Z,13Z,15E,19Z)-docosahexaenoate + 2 glutathione = (17S)-hydroxy-(4Z,7Z,10Z,13Z,15E,19Z)-docosahexaenoate + glutathione disulfide + H2O. Its function is as follows. Catalyzes the reduction of hydroperoxides in a glutathione-dependent manner thus regulating cellular redox homeostasis. Can reduce small soluble hydroperoxides such as H2O2, cumene hydroperoxide and tert-butyl hydroperoxide, as well as several fatty acid-derived hydroperoxides. In platelets catalyzes the reduction of 12-hydroperoxyeicosatetraenoic acid, the primary product of the arachidonate 12-lipoxygenase pathway. The chain is Glutathione peroxidase 1 from Rattus norvegicus (Rat).